A 225-amino-acid polypeptide reads, in one-letter code: NAD(P)H-quinone oxidoreductase subunit K, chloroplastic (225 aa).

Residues cysteine 43, cysteine 44, cysteine 108, and cysteine 139 each contribute to the [4Fe-4S] cluster site.

This sequence belongs to the complex I 20 kDa subunit family. NDH is composed of at least 16 different subunits, 5 of which are encoded in the nucleus. Requires [4Fe-4S] cluster as cofactor.

Its subcellular location is the plastid. It is found in the chloroplast thylakoid membrane. The enzyme catalyses a plastoquinone + NADH + (n+1) H(+)(in) = a plastoquinol + NAD(+) + n H(+)(out). The catalysed reaction is a plastoquinone + NADPH + (n+1) H(+)(in) = a plastoquinol + NADP(+) + n H(+)(out). NDH shuttles electrons from NAD(P)H:plastoquinone, via FMN and iron-sulfur (Fe-S) centers, to quinones in the photosynthetic chain and possibly in a chloroplast respiratory chain. The immediate electron acceptor for the enzyme in this species is believed to be plastoquinone. Couples the redox reaction to proton translocation, and thus conserves the redox energy in a proton gradient. This chain is NAD(P)H-quinone oxidoreductase subunit K, chloroplastic, found in Atropa belladonna (Belladonna).